A 406-amino-acid chain; its full sequence is uncharacterized protein (406 aa).

Residue Gly2 is the site of N-myristoyl glycine; by host attachment. Positions 291-406 (QLESTTEVKP…FQYNKPTYDI (116 aa)) are disordered. The span at 296-310 (TEVKPESTTEVKPES) shows a compositional bias: basic and acidic residues. The span at 311–323 (TSEVQPESTTEFQ) shows a compositional bias: polar residues. Composition is skewed to low complexity over residues 324 to 333 (PESTTVVEPE), 341 to 351 (ESTTEFQPEST), and 359 to 369 (TTEPQVESTTE). Polar residues predominate over residues 370 to 406 (FQPESSTEPQVESTVEVQAESMNESSYFQYNKPTYDI).

This is an uncharacterized protein from Acanthamoeba polyphaga (Amoeba).